Consider the following 1023-residue polypeptide: Peroxisome proliferator-activated receptor gamma coactivator 1-beta (1023 aa).

An abolishes DNA transcriptional activity when missing region spans residues 1 to 91 (MAGNDCGALL…LFQIDSENEA (91 aa)). The interval 122–148 (LSCTSASPAPSSAPPSPAPEKPSAPAP) is disordered. Over residues 132 to 146 (SSAPPSPAPEKPSAP) the composition is skewed to pro residues. The LXXLL motif 1 signature appears at 156–160 (LQKLL). 3 disordered regions span residues 165-210 (YPTS…QSQS), 237-278 (LQSP…PGAP), and 302-331 (RKLP…WSRH). The LXXLL motif 2 signature appears at 343–347 (LRELL). Disordered stretches follow at residues 369–463 (LTPR…LPWT), 520–567 (RELG…QLPP), 601–623 (TAGL…FKPD), and 636–683 (LPSP…GQKR). Serine 384 carries the post-translational modification Phosphoserine. Residues 412–422 (LRLEVKREVRR) show a composition bias toward basic and acidic residues. The segment covering 429-450 (QEEEDEEEEEEEEEEEKEEEEE) has biased composition (acidic residues). At serine 524 the chain carries Phosphoserine. The span at 614–623 (PTEEDPFKPD) shows a compositional bias: basic and acidic residues. At serine 638 the chain carries Phosphoserine. The short motif at 691-694 (DHDY) is the HCFC1-binding-motif (HBM) element. Disordered stretches follow at residues 717–758 (VHLE…LRDH) and 779–867 (DLAS…WSPA). Positions 793–805 (EDSSSSSGESSFL) are enriched in low complexity. The segment covering 806-825 (PEEEEEEGEEEEEDDEEEDS) has biased composition (acidic residues). Low complexity predominate over residues 849 to 866 (CSRSRSSSGSSPCHSWSP). Residues 902–976 (RVVYIQNLSS…RNEPSFQLSY (75 aa)) enclose the RRM domain.

As to quaternary structure, interacts with hepatocyte nuclear factor 4-alpha/HNF4A, Sterol regulatory binding transcription factor 1/SREBF1, PPAR-alpha/PPARA, thyroid hormone receptor beta/THRB and host cell factor/HCFC1. Interacts with estrogen-related receptor gamma/ESRRG and alpha/ESRRA. Interacts with PRDM16. Interacts with estrogen receptor alpha/ESR1. Ubiquitous with higher expression in heart, brain and skeletal muscle.

It is found in the nucleus. In terms of biological role, plays a role of stimulator of transcription factors and nuclear receptors activities. Activates transcriptional activity of estrogen receptor alpha, nuclear respiratory factor 1 (NRF1) and glucocorticoid receptor in the presence of glucocorticoids. May play a role in constitutive non-adrenergic-mediated mitochondrial biogenesis as suggested by increased basal oxygen consumption and mitochondrial number when overexpressed. May be involved in fat oxidation and non-oxidative glucose metabolism and in the regulation of energy expenditure. Induces the expression of PERM1 in the skeletal muscle in an ESRRA-dependent manner. This Homo sapiens (Human) protein is Peroxisome proliferator-activated receptor gamma coactivator 1-beta (PPARGC1B).